A 156-amino-acid chain; its full sequence is Small ribosomal subunit protein uS7 (156 aa).

Belongs to the universal ribosomal protein uS7 family. As to quaternary structure, part of the 30S ribosomal subunit. Contacts proteins S9 and S11.

In terms of biological role, one of the primary rRNA binding proteins, it binds directly to 16S rRNA where it nucleates assembly of the head domain of the 30S subunit. Is located at the subunit interface close to the decoding center, probably blocks exit of the E-site tRNA. This chain is Small ribosomal subunit protein uS7, found in Mannheimia succiniciproducens (strain KCTC 0769BP / MBEL55E).